We begin with the raw amino-acid sequence, 267 residues long: Large ribosomal subunit protein uL2c (267 aa).

The protein belongs to the universal ribosomal protein uL2 family. Part of the 50S ribosomal subunit.

The protein localises to the plastid. Its subcellular location is the apicoplast. The sequence is that of Large ribosomal subunit protein uL2c (rpl2) from Toxoplasma gondii.